The sequence spans 1244 residues: Protein STU1 (1244 aa).

HEAT repeat units lie at residues leucine 87–alanine 124 and leucine 159–proline 196. The segment covering glutamate 232 to serine 243 has biased composition (low complexity). Disordered regions lie at residues glutamate 232–valine 326, leucine 561–valine 758, and alanine 795–lysine 998. 4 stretches are compositionally biased toward polar residues: residues arginine 261–histidine 271, lysine 287–serine 312, alanine 574–serine 591, and alanine 607–phenylalanine 622. 3 stretches are compositionally biased toward low complexity: residues serine 652 to alanine 663, alanine 690 to lysine 703, and proline 837 to arginine 850. Composition is skewed to basic and acidic residues over residues leucine 863 to serine 872 and lysine 979 to lysine 998. HEAT repeat units follow at residues threonine 1038–threonine 1075 and cysteine 1126–leucine 1163.

It belongs to the CLASP family. Interacts with microtubules.

The protein resides in the cytoplasm. It localises to the cytoskeleton. Its subcellular location is the nucleus. The protein localises to the spindle. In terms of biological role, microtubule binding protein that promotes the stabilization of dynamic microtubules. Required for mitotic spindle formation. This chain is Protein STU1 (STU1), found in Coccidioides immitis (strain RS) (Valley fever fungus).